We begin with the raw amino-acid sequence, 575 residues long: Transcription factor coe2 (575 aa).

Positions 63 to 66 (RKSN) are interaction with DNA. The segment at 151-170 (CRVLLTHEVMCSRCCEKKSC) adopts a C5-type zinc-finger fold. Interaction with DNA stretches follow at residues 197 to 204 (NCLKTAGN) and 236 to 239 (NNSK). Residues 254-336 (PCIKAISPSE…CKGAPGRFIY (83 aa)) form the IPT/TIG domain. Positions 450–487 (IRNTSSISPRGYSSSSTPQQSNYSTPSNSMNGYSNVPM) are disordered. Residues 454–476 (SSISPRGYSSSSTPQQSNYSTPS) show a composition bias toward low complexity. The span at 477–487 (NSMNGYSNVPM) shows a compositional bias: polar residues.

It belongs to the COE family.

The protein localises to the nucleus. Its function is as follows. May play a pivotal role in the transcriptional cascade that specifies primary neurons in embryos. Stabilizes the higher neural potential of selected progenitor cells that express neurog2/X-ngnr-1 by maintaining Delta-Notch signaling. Thus ensures the transition between neural competence and irreversible commitment to a neural fate. Also promotes neuronal differentiation by activating neurod1 expression, directly or indirectly. The protein is Transcription factor coe2 of Xenopus tropicalis (Western clawed frog).